A 318-amino-acid polypeptide reads, in one-letter code: Glutathione synthetase (318 aa).

The 186-residue stretch at 129–314 (KLAITEFPDL…VPEMFAVALE (186 aa)) folds into the ATP-grasp domain. ATP is bound at residue 155–211 (HAAQGDVIVKPLDDMGGTGIFRLQRSEPNLNAILETLTDNGTRTIMAQRYIPEIVKG). Residues E285 and N287 each contribute to the Mg(2+) site.

The protein belongs to the prokaryotic GSH synthase family. Mg(2+) serves as cofactor. Mn(2+) is required as a cofactor.

The catalysed reaction is gamma-L-glutamyl-L-cysteine + glycine + ATP = glutathione + ADP + phosphate + H(+). Its pathway is sulfur metabolism; glutathione biosynthesis; glutathione from L-cysteine and L-glutamate: step 2/2. The sequence is that of Glutathione synthetase from Bordetella pertussis (strain Tohama I / ATCC BAA-589 / NCTC 13251).